Here is a 438-residue protein sequence, read N- to C-terminus: Battenin (438 aa).

Residues 1–25 are disordered; that stretch reads MGGCAGSRRRLSDSEGEETVPEPRL. Over 1-37 the chain is Cytoplasmic; it reads MGGCAGSRRRLSDSEGEETVPEPRLPLLDHQGAHWKN. 2 positions are modified to phosphoserine: Ser-12 and Ser-14. The helical transmembrane segment at 38–58 threads the bilayer; sequence AVGFWLLGLCNNFSYVVMLSA. The Lumenal portion of the chain corresponds to 59 to 127; the sequence is AHDILSHERT…GLHLLPYSPR (69 aa). Residues Asn-71 and Asn-85 are each glycosylated (N-linked (GlcNAc...) asparagine). Residues 128-148 form a helical membrane-spanning segment; it reads VLVSGICAAGSFVLVAFSHSV. The Cytoplasmic portion of the chain corresponds to 149–151; that stretch reads GTS. The helical transmembrane segment at 152 to 172 threads the bilayer; that stretch reads LCGVVLASISSGLGEVTFLSL. Residues 173–182 are Lumenal-facing; the sequence is TAFYPRAVIS. A helical transmembrane segment spans residues 183–203; sequence WWSSGTGGAGLLGALSYLGLT. At 204-277 the chain is on the cytoplasmic side; that stretch reads QAGLSPQQTL…SLSLRERWTV (74 aa). Positions 237–268 are disordered; it reads QDPGGEEEAESSARQPLIRTEAPESKPGSSSS. Residues 242 to 244 carry the Lysosomal targeting motif motif; the sequence is EEE. The Lysosomal targeting motif. Required for AP1G1, AP2A2 and AP3D1 interaction motif lies at 253–254; sequence LI. The chain crosses the membrane as a helical span at residues 278 to 298; sequence FKGLLWYIVPLVVVYFAEYFI. At 299–346 the chain is on the lumenal side; sequence NQGLFELLFFRNTSLSHAQQYRWYQMLYQAGVFASRSSLRCCHIRFTW. A glycan (N-linked (GlcNAc...) asparagine) is linked at Asn-310. The chain crosses the membrane as a helical span at residues 347–367; sequence ALALLQCLNLAFLLADVWFGF. At 368–438 the chain is on the cytoplasmic side; it reads LLSIYFVFLI…PLHDFLCQLS (71 aa). The Lysosomal targeting motif signature appears at 409 to 419; sequence MATTCISDTLG. A Cysteine methyl ester modification is found at Cys-435. A lipid anchor (S-farnesyl cysteine) is attached at Cys-435. Positions 436–438 are cleaved as a propeptide — removed in mature form; the sequence is QLS.

Belongs to the battenin family. As to quaternary structure, interacts with DCTN1, KIF3A, RAB7A and RILP. Interacts with CLN5. Highly glycosylated. Post-translationally, farnesylation is important for trafficking to lysosomes.

It is found in the lysosome membrane. Its subcellular location is the late endosome. The protein localises to the lysosome. Mediates microtubule-dependent, anterograde transport connecting the Golgi network, endosomes, autophagosomes, lysosomes and plasma membrane, and participates in several cellular processes such as regulation of lysosomal pH, lysosome protein degradation, receptor-mediated endocytosis, autophagy, transport of proteins and lipids from the TGN, apoptosis and synaptic transmission. Facilitates the proteins transport from trans-Golgi network (TGN)-to other membrane compartments such as transport of microdomain-associated proteins to the plasma membrane, IGF2R transport to the lysosome where it regulates the CTSD release leading to regulation of CTSD maturation and thereby APP intracellular processing. Moreover regulates CTSD activity in response to osmotic stress. Also binds galactosylceramide and transports it from the trans Golgi to the rafts, which may have immediate and downstream effects on cell survival by modulating ceramide synthesis. At the plasma membrane, regulates actin-dependent events including filopodia formation, cell migration, and pinocytosis through ARF1-CDC42 pathway and also the cytoskeleton organization through interaction with MYH10 and fodrin leading to the regulation of the plasma membrane association of Na+, K+ ATPase complex. Regulates synaptic transmission in the amygdala, hippocampus, and cerebellum through regulation of synaptic vesicles density and their proximity to active zones leading to modulation of short-term plasticity and age-dependent anxious behavior, learning and memory. Regulates autophagic vacuoles (AVs) maturation by modulating the trafficking between endocytic and autophagolysosomal/lysosomal compartments, which involves vesicle fusion leading to regulation of degradation process. Also participates in cellular homeostasis of compounds such as, water, ions, amino acids, proteins and lipids in several tissue namely in brain and kidney through regulation of their transport and synthesis. The protein is Battenin of Macaca fascicularis (Crab-eating macaque).